The chain runs to 922 residues: Dual serine/threonine and tyrosine protein kinase (922 aa).

Residues 645–899 (PKLGRELGRG…PLLGIVEPSL (255 aa)) form the Protein kinase domain. Residues 651-659 (LGRGQYGVV) and Lys674 each bind ATP. The active-site Proton acceptor is the Asp770.

Belongs to the protein kinase superfamily. Ser/Thr protein kinase family.

The protein resides in the cytoplasm. It is found in the cell membrane. Its subcellular location is the apical cell membrane. The protein localises to the basolateral cell membrane. It localises to the cell junction. It carries out the reaction L-seryl-[protein] + ATP = O-phospho-L-seryl-[protein] + ADP + H(+). The enzyme catalyses L-threonyl-[protein] + ATP = O-phospho-L-threonyl-[protein] + ADP + H(+). The catalysed reaction is L-tyrosyl-[protein] + ATP = O-phospho-L-tyrosyl-[protein] + ADP + H(+). In terms of biological role, may act as a positive regulator of ERK phosphorylation downstream of fibroblast growth factor-receptor activation. May induce both caspase-dependent apoptosis and caspase-independent cell death. May play a role in the embryonic development. The protein is Dual serine/threonine and tyrosine protein kinase of Tetraodon nigroviridis (Spotted green pufferfish).